The sequence spans 299 residues: F-actin-capping protein subunit alpha-3 (299 aa).

Phosphoserine is present on Ser290.

The protein belongs to the F-actin-capping protein alpha subunit family. As to quaternary structure, component of the F-actin capping complex, composed of a heterodimer of an alpha and a beta subunit. Component of the WASH complex, composed of F-actin-capping protein subunit alpha (CAPZA1, CAPZA2 or CAPZA3), F-actin-capping protein subunit beta (CAPZB), WASH (WASHC1, WASH2P, WASH3P, WASH4P, WASH5P or WASH6P), WASHC2 (WASHC2A or WASHC2C), WASHC3, WASHC4 and WASHC5. Expressed exclusively in testis and sperm. Highest expression is found in the neck region of ejaculated sperm with lower levels found in the tail and postacrosome region.

It is found in the cytoplasm. Its subcellular location is the cytoskeleton. F-actin-capping proteins bind in a Ca(2+)-independent manner to the fast growing ends of actin filaments (barbed end) thereby blocking the exchange of subunits at these ends. Unlike other capping proteins (such as gelsolin and severin), these proteins do not sever actin filaments. May play a role in the morphogenesis of spermatid. The protein is F-actin-capping protein subunit alpha-3 (CAPZA3) of Homo sapiens (Human).